A 160-amino-acid polypeptide reads, in one-letter code: Cyclic pyranopterin monophosphate synthase (160 aa).

Residues 74 to 76 and 112 to 113 contribute to the substrate site; these read LSH and ME. Asp-127 is a catalytic residue.

The protein belongs to the MoaC family. Homohexamer; trimer of dimers.

It catalyses the reaction (8S)-3',8-cyclo-7,8-dihydroguanosine 5'-triphosphate = cyclic pyranopterin phosphate + diphosphate. Its pathway is cofactor biosynthesis; molybdopterin biosynthesis. Functionally, catalyzes the conversion of (8S)-3',8-cyclo-7,8-dihydroguanosine 5'-triphosphate to cyclic pyranopterin monophosphate (cPMP). The sequence is that of Cyclic pyranopterin monophosphate synthase from Pelobacter propionicus (strain DSM 2379 / NBRC 103807 / OttBd1).